A 342-amino-acid polypeptide reads, in one-letter code: Ribosomal RNA small subunit methyltransferase H (342 aa).

Residues 62–64, Asp82, Phe108, Asp129, and Gln136 contribute to the S-adenosyl-L-methionine site; that span reads GGH. Positions 280–319 are disordered; that stretch reads RHSKGQYPEDENLPMPPKRPRYFSKPKRVGPSKAEISHNP. The segment covering 297 to 309 has biased composition (basic residues); the sequence is KRPRYFSKPKRVG.

Belongs to the methyltransferase superfamily. RsmH family.

It is found in the cytoplasm. It carries out the reaction cytidine(1402) in 16S rRNA + S-adenosyl-L-methionine = N(4)-methylcytidine(1402) in 16S rRNA + S-adenosyl-L-homocysteine + H(+). Its function is as follows. Specifically methylates the N4 position of cytidine in position 1402 (C1402) of 16S rRNA. This is Ribosomal RNA small subunit methyltransferase H from Psychrobacter cryohalolentis (strain ATCC BAA-1226 / DSM 17306 / VKM B-2378 / K5).